A 261-amino-acid chain; its full sequence is Potassium/proton antiporter CemA (261 aa).

3 helical membrane passes run 138–158 (IISH…YLIL), 184–204 (FLIL…GWEL), and 221–241 (IISG…KYWI).

The protein belongs to the CemA family.

The protein resides in the plastid. It is found in the chloroplast inner membrane. The enzyme catalyses K(+)(in) + H(+)(out) = K(+)(out) + H(+)(in). Contributes to K(+)/H(+) antiport activity by supporting proton efflux to control proton extrusion and homeostasis in chloroplasts in a light-dependent manner to modulate photosynthesis. Prevents excessive induction of non-photochemical quenching (NPQ) under continuous-light conditions. Indirectly promotes efficient inorganic carbon uptake into chloroplasts. In Pinus koraiensis (Korean pine), this protein is Potassium/proton antiporter CemA.